The sequence spans 206 residues: Small ribosomal subunit protein uS4 (206 aa).

The region spanning 96-156 (GRLDNVVYRM…EKAKQQARIK (61 aa)) is the S4 RNA-binding domain.

The protein belongs to the universal ribosomal protein uS4 family. Part of the 30S ribosomal subunit. Contacts protein S5. The interaction surface between S4 and S5 is involved in control of translational fidelity.

In terms of biological role, one of the primary rRNA binding proteins, it binds directly to 16S rRNA where it nucleates assembly of the body of the 30S subunit. Functionally, with S5 and S12 plays an important role in translational accuracy. In Vibrio campbellii (strain ATCC BAA-1116), this protein is Small ribosomal subunit protein uS4.